Here is a 524-residue protein sequence, read N- to C-terminus: Origin of replication complex subunit 5 (524 aa).

Residues 1–19 (MSQPVTPRRTTRSSASASP) show a composition bias toward low complexity. The tract at residues 1–56 (MSQPVTPRRTTRSSASASPSPAPASPTSPPKSRPKPSPRRQLLAAAAAPPKEDGSS) is disordered. A compositionally biased stretch (pro residues) spans 20–31 (SPAPASPTSPPK). Residues 39 to 49 (RRQLLAAAAAP) are compositionally biased toward low complexity. 90–97 (GGAATGKT) is an ATP binding site.

The protein belongs to the ORC5 family. Component of the origin recognition complex (ORC) composed of at least ORC1, ORC2, ORC3, ORC4, ORC5 and ORC6. ORC is regulated in a cell-cycle and development dependent manner. It is sequentially assembled at the exit from anaphase of mitosis and disassembled as cells enter S phase.

It localises to the nucleus. Functionally, component of the origin recognition complex (ORC) that binds origins of replication. DNA-binding is ATP-dependent. The specific DNA sequences that define origins of replication have not been identified yet. ORC is required to assemble the pre-replication complex necessary to initiate DNA replication. This Oryza sativa subsp. indica (Rice) protein is Origin of replication complex subunit 5.